The following is a 232-amino-acid chain: uncharacterized protein (232 aa).

Disordered regions lie at residues 123 to 147 (VAGGKHSSNRRPRGTIRAVPGRKYP) and 169 to 200 (AAADPQERVGPRGRRGLAGQQQCRGRPGPSLR).

The protein belongs to the mycobacterial PPE family.

This is an uncharacterized protein from Mycobacterium tuberculosis (strain ATCC 25618 / H37Rv).